The primary structure comprises 801 residues: Probable inorganic carbon transporter subunit DabA (801 aa).

Residues Cys-330, Asp-332, His-489, and Cys-504 each coordinate Zn(2+).

The protein belongs to the inorganic carbon transporter (TC 9.A.2) DabA family. In terms of assembly, forms a complex with DabB. The cofactor is Zn(2+).

The protein localises to the cell inner membrane. In terms of biological role, part of an energy-coupled inorganic carbon pump. The protein is Probable inorganic carbon transporter subunit DabA of Jannaschia sp. (strain CCS1).